The primary structure comprises 162 residues: Protein hcp1 (162 aa).

The protein belongs to the hcp1 family. As to quaternary structure, hexamer. Three hcp1 monomers form two closely related hexameric rings with a 40 Angstrom internal diameter.

It is found in the secreted. Its function is as follows. Required for assembly of the protein secretion apparatus HSI-I. Actively secreted during chronic infection of cystic fibrosis patients. The chain is Protein hcp1 (hcp1) from Pseudomonas aeruginosa (strain ATCC 15692 / DSM 22644 / CIP 104116 / JCM 14847 / LMG 12228 / 1C / PRS 101 / PAO1).